The primary structure comprises 129 residues: Small ribosomal subunit protein uS11 (129 aa).

Belongs to the universal ribosomal protein uS11 family. As to quaternary structure, part of the 30S ribosomal subunit. Interacts with proteins S7 and S18. Binds to IF-3.

Its function is as follows. Located on the platform of the 30S subunit, it bridges several disparate RNA helices of the 16S rRNA. Forms part of the Shine-Dalgarno cleft in the 70S ribosome. This is Small ribosomal subunit protein uS11 from Symbiobacterium thermophilum (strain DSM 24528 / JCM 14929 / IAM 14863 / T).